Here is a 256-residue protein sequence, read N- to C-terminus: Acetyl-coenzyme A carboxylase carboxyl transferase subunit beta 2 (256 aa).

The CoA carboxyltransferase N-terminal domain occupies 1–256 (MTVKCNKCKE…LAIHAETVSA (256 aa)). Zn(2+) is bound by residues Cys5, Cys8, Cys24, and Cys27. A C4-type zinc finger spans residues 5–27 (CNKCKEEINKEDLEKNYYICPLC).

Belongs to the AccD/PCCB family. In terms of assembly, acetyl-CoA carboxylase is a heterohexamer composed of biotin carboxyl carrier protein (AccB), biotin carboxylase (AccC) and two subunits each of ACCase subunit alpha (AccA) and ACCase subunit beta (AccD). Zn(2+) serves as cofactor.

The protein resides in the cytoplasm. It catalyses the reaction N(6)-carboxybiotinyl-L-lysyl-[protein] + acetyl-CoA = N(6)-biotinyl-L-lysyl-[protein] + malonyl-CoA. Its pathway is lipid metabolism; malonyl-CoA biosynthesis; malonyl-CoA from acetyl-CoA: step 1/1. In terms of biological role, component of the acetyl coenzyme A carboxylase (ACC) complex. Biotin carboxylase (BC) catalyzes the carboxylation of biotin on its carrier protein (BCCP) and then the CO(2) group is transferred by the transcarboxylase to acetyl-CoA to form malonyl-CoA. This is Acetyl-coenzyme A carboxylase carboxyl transferase subunit beta 2 from Lachnospira eligens (strain ATCC 27750 / DSM 3376 / VPI C15-48 / C15-B4) (Eubacterium eligens).